Here is a 261-residue protein sequence, read N- to C-terminus: uncharacterized protein (261 aa).

An N-terminal signal peptide occupies residues 1–22 (MGYSKRFALYISVMILIFAIAG). Cysteine 23 carries N-palmitoyl cysteine lipidation. Residue cysteine 23 is the site of S-diacylglycerol cysteine attachment.

Belongs to the staphylococcal tandem lipoprotein family.

It localises to the cell membrane. This is an uncharacterized protein from Staphylococcus aureus (strain N315).